Consider the following 86-residue polypeptide: Large ribosomal subunit protein bL31B (86 aa).

Belongs to the bacterial ribosomal protein bL31 family. Type B subfamily. In terms of assembly, part of the 50S ribosomal subunit.

The sequence is that of Large ribosomal subunit protein bL31B from Streptococcus equi subsp. zooepidemicus (strain H70).